We begin with the raw amino-acid sequence, 564 residues long: Aspyridones efflux protein (564 aa).

Residues 1–17 show a composition bias toward low complexity; it reads MHPDQADTAAMQQQTTT. The segment at 1–49 is disordered; that stretch reads MHPDQADTAAMQQQTTTECSDRSRPEKAEEGHAREHTVTRTCSREPEQT. The segment covering 19 to 47 has biased composition (basic and acidic residues); sequence CSDRSRPEKAEEGHAREHTVTRTCSREPE. The next 10 membrane-spanning stretches (helical) occupy residues 66-86, 127-147, 158-178, 185-205, 216-236, 260-280, 287-307, 335-355, 368-388, and 392-412; these read AICL…TAIP, WTFL…ATAP, IAGC…THSV, LFMA…PPLG, WCFW…VFLF, VGTL…QWGG, SGIV…FGIV, FALG…FQGV, LPML…VTII, and APFM…LLLF. N-linked (GlcNAc...) asparagine glycosylation occurs at asparagine 415. A run of 2 helical transmembrane segments spans residues 416–436 and 454–474; these read VTAA…GFGW and IATA…VSVA. Asparagine 524 carries an N-linked (GlcNAc...) asparagine glycan. Residues 528–548 form a helical membrane-spanning segment; sequence LSAFFVATIMAIMSLVGCTFV.

Belongs to the major facilitator superfamily. TCR/Tet family.

It localises to the cell membrane. Efflux pump that may be involved in the secretion of leporins. This chain is Aspyridones efflux protein (TP), found in Neocamarosporium betae (Beet black rot fungus).